Consider the following 144-residue polypeptide: Nucleoside diphosphate kinase (144 aa).

ATP contacts are provided by Lys9, Phe57, Arg85, Thr91, Arg102, and Asn112. His115 acts as the Pros-phosphohistidine intermediate in catalysis.

This sequence belongs to the NDK family. As to quaternary structure, homotetramer. The cofactor is Mg(2+).

The protein resides in the cytoplasm. It carries out the reaction a 2'-deoxyribonucleoside 5'-diphosphate + ATP = a 2'-deoxyribonucleoside 5'-triphosphate + ADP. The catalysed reaction is a ribonucleoside 5'-diphosphate + ATP = a ribonucleoside 5'-triphosphate + ADP. Major role in the synthesis of nucleoside triphosphates other than ATP. The ATP gamma phosphate is transferred to the NDP beta phosphate via a ping-pong mechanism, using a phosphorylated active-site intermediate. The sequence is that of Nucleoside diphosphate kinase from Chlamydia pneumoniae (Chlamydophila pneumoniae).